A 571-amino-acid chain; its full sequence is Septation ring formation regulator EzrA (571 aa).

The Extracellular portion of the chain corresponds to 1–3 (MYY). Residues 4-22 (MLIGFIIVVIAVISAGYIL) form a helical membrane-spanning segment. Residues 23 to 571 (KRKHYQRINE…ESKVSVDDIE (549 aa)) lie on the Cytoplasmic side of the membrane. Coiled coils occupy residues 170–215 (EAKL…QMER), 248–299 (LAQM…TLEH), 326–374 (DALA…ASGE), 400–437 (NFAEELRSLRKDELEARDDAERMRRAIITLDRKMERER), and 478–529 (RIAE…ENHF).

Belongs to the EzrA family.

Its subcellular location is the cell membrane. Functionally, negative regulator of FtsZ ring formation; modulates the frequency and position of FtsZ ring formation. Inhibits FtsZ ring formation at polar sites. Interacts either with FtsZ or with one of its binding partners to promote depolymerization. The sequence is that of Septation ring formation regulator EzrA from Listeria innocua serovar 6a (strain ATCC BAA-680 / CLIP 11262).